The sequence spans 372 residues: Protein RecA (372 aa).

Residue 77–84 (GPESSGKT) participates in ATP binding.

Belongs to the RecA family.

It is found in the cytoplasm. Can catalyze the hydrolysis of ATP in the presence of single-stranded DNA, the ATP-dependent uptake of single-stranded DNA by duplex DNA, and the ATP-dependent hybridization of homologous single-stranded DNAs. It interacts with LexA causing its activation and leading to its autocatalytic cleavage. The chain is Protein RecA from Corynebacterium diphtheriae (strain ATCC 700971 / NCTC 13129 / Biotype gravis).